The primary structure comprises 138 residues: HTH-type transcriptional regulator CueR (138 aa).

An HTH merR-type domain is found at 1 to 69 (MNISDVAKKT…LEECGELVNL (69 aa)). A DNA-binding region (H-T-H motif) is located at residues 4–23 (SDVAKKTGLTSKAIRFYEEK). Cu(+) contacts are provided by Cys-112 and Cys-120.

Homodimer.

The protein resides in the cytoplasm. Functionally, regulates the transcription of the copA and cuiD (cueO) genes. Detects cytoplasmic copper stress and activates transcription in response to increasing copper concentrations. The sequence is that of HTH-type transcriptional regulator CueR (cueR) from Salmonella typhimurium (strain LT2 / SGSC1412 / ATCC 700720).